The chain runs to 114 residues: uncharacterized protein (114 aa).

This sequence to E.coli YggL.

This is an uncharacterized protein from Haemophilus influenzae (strain ATCC 51907 / DSM 11121 / KW20 / Rd).